Consider the following 83-residue polypeptide: Kappa-theraphotoxin-Cg2b (83 aa).

Positions 1 to 21 (MKGSAFAIILGLVVLCACSFA) are cleaved as a signal peptide. A propeptide spanning residues 22 to 53 (EDEQDQFASPNELLRSMFLESRHELIPEVEGR) is cleaved from the precursor. 3 disulfides stabilise this stretch: cysteine 55/cysteine 69, cysteine 62/cysteine 74, and cysteine 68/cysteine 78.

This sequence belongs to the neurotoxin 30 (phrixotoxin) family. As to expression, expressed by the venom gland.

Its subcellular location is the secreted. In terms of biological role, probable ion channel inhibitor. This chain is Kappa-theraphotoxin-Cg2b, found in Chilobrachys guangxiensis (Chinese earth tiger tarantula).